Consider the following 344-residue polypeptide: Thiamine thiazole synthase (344 aa).

Residues cysteine 90, 111–112 (EA), glycine 119, and valine 184 contribute to the substrate site. Cysteine 232 is modified (2,3-didehydroalanine (Cys)). Residues aspartate 234, histidine 249, methionine 301, and 311–313 (RMG) each bind substrate.

This sequence belongs to the THI4 family. Homooctamer. Interacts with cyp-41. Fe cation is required as a cofactor. During the catalytic reaction, a sulfide is transferred from Cys-232 to a reaction intermediate, generating a dehydroalanine residue.

The protein localises to the cytoplasm. The protein resides in the nucleus. It carries out the reaction [ADP-thiazole synthase]-L-cysteine + glycine + NAD(+) = [ADP-thiazole synthase]-dehydroalanine + ADP-5-ethyl-4-methylthiazole-2-carboxylate + nicotinamide + 3 H2O + 2 H(+). Involved in biosynthesis of the thiamine precursor thiazole. Catalyzes the conversion of NAD and glycine to adenosine diphosphate 5-(2-hydroxyethyl)-4-methylthiazole-2-carboxylic acid (ADT), an adenylated thiazole intermediate. The reaction includes an iron-dependent sulfide transfer from a conserved cysteine residue of the protein to a thiazole intermediate. The enzyme can only undergo a single turnover, which suggests it is a suicide enzyme. May have additional roles in adaptation to various stress conditions and in DNA damage tolerance. The chain is Thiamine thiazole synthase from Neurospora crassa (strain ATCC 24698 / 74-OR23-1A / CBS 708.71 / DSM 1257 / FGSC 987).